Reading from the N-terminus, the 401-residue chain is Voltage-gated potassium channel subunit beta-1 (401 aa).

Residues threonine 90, tryptophan 91, glutamine 97, and aspartate 119 each coordinate NADP(+). Tyrosine 124 (proton donor/acceptor) is an active-site residue. Asparagine 192, serine 222, arginine 223, glutamine 248, tryptophan 277, serine 278, proline 279, leucine 280, alanine 281, cysteine 282, lysine 288, arginine 298, glycine 357, serine 359, glutamine 363, glutamate 366, and asparagine 367 together coordinate NADP(+).

The protein belongs to the shaker potassium channel beta subunit family. In terms of assembly, homotetramer. Interaction with tetrameric potassium channel alpha subunits gives rise to a heterooctamer. Identified in potassium channel complexes containing KCNA1, KCNA2, KCNA4, KCNA5, KCNA6, KCNAB1 and KCNAB2. Part of a complex containing KCNA1, KCNA4 and LGI1; interaction with LGI1 inhibits down-regulation of KCNA1 channel activity. Interacts with the dimer formed by GNB1 and GNG2; this enhances KCNA1 binding. Interacts with SQSTM. In terms of tissue distribution, detected in brain, in hippocampus and striatum (at protein level). Predominantly expressed in brain. No expression found in heart, skeletal muscle or kidney. In the late embryonic and early neonatal brain, highly expressed in hippocampus, cerebral cortex, caudate putamen, colliculus and cerebellum.

The protein localises to the cytoplasm. It localises to the membrane. Its subcellular location is the cell membrane. The catalysed reaction is a primary alcohol + NADP(+) = an aldehyde + NADPH + H(+). The enzyme catalyses a secondary alcohol + NADP(+) = a ketone + NADPH + H(+). Its function is as follows. Regulatory subunit of the voltage-gated potassium (Kv) Shaker channels composed of pore-forming and potassium-conducting alpha subunits and of regulatory beta subunits. The beta-1/KCNAB1 cytoplasmic subunit mediates closure of delayed rectifier potassium channels by physically obstructing the pore via its N-terminal domain and increases the speed of channel closure for other family members. Promotes the inactivation of KCNA1, KCNA2, KCNA4, KCNA5 and KCNA6 alpha subunit-containing channels. Displays nicotinamide adenine dinucleotide phosphate (NADPH)-dependent aldoketoreductase activity by catalyzing the NADPH-dependent reduction of a variety of endogenous aldehydes and ketones. The binding of NADPH is required for efficient down-regulation of potassium channel activity. Oxidation of the bound NADPH restrains N-terminal domain from blocking the channel, thereby decreasing N-type inactivation of potassium channel activity. The protein is Voltage-gated potassium channel subunit beta-1 of Mus musculus (Mouse).